The primary structure comprises 334 residues: Protein FAM50B (334 aa).

Residue A2 is modified to N-acetylalanine. Residues 122–175 (FTLDEEEGDQEDSRQAESAEAHSAGAKKNLGKNPDVDTSFLPDREREEEENRLR) are disordered. 2 stretches are compositionally biased toward basic and acidic residues: residues 132–141 (EDSRQAESAE) and 163–175 (PDREREEEENRLR).

Belongs to the FAM50 family. As to expression, widely expressed. Abundant in testis, where it is expressed in seminiferous tubules, not in the interstitium. At the cellular level, expressed in primary spermatocytes and round spermatids, but not detectable in spermatogonia, elongating spermatids, mature spermatozoa, Sertoli cells or Leydig cells.

The polypeptide is Protein FAM50B (Fam50b) (Mus musculus (Mouse)).